The chain runs to 643 residues: Maternal embryonic leucine zipper kinase (643 aa).

A Protein kinase domain is found at 11–263; sequence YELYETIGTG…MRNLLNHPWV (253 aa). Residues 17–25 and Lys-40 each bind ATP; that span reads IGTGGFAKV. Position 56 is a phosphothreonine; by autocatalysis (Thr-56). Asp-132 functions as the Proton acceptor in the catalytic mechanism. A Phosphotyrosine; by autocatalysis modification is found at Tyr-163. At Thr-167 the chain carries Phosphothreonine; by autocatalysis. Ser-171 and Ser-253 each carry phosphoserine; by autocatalysis. The segment at 282-321 is UBA-like; the sequence is LDEDCVTELSVHHRSSRQTMEDLISSWQYDHLTATYLLLL. Residues 326–643 are autoinhibitory region; the sequence is RGKPARLQLL…VEDILSGCKM (318 aa). Residues Ser-336 and Ser-343 each carry the phosphoserine; by autocatalysis modification. At Ser-352 the chain carries Phosphoserine. Ser-399 and Ser-423 each carry phosphoserine; by autocatalysis. The residue at position 486 (Thr-486) is a Phosphothreonine; by autocatalysis. Ser-490 is modified (phosphoserine). A Phosphoserine; by autocatalysis modification is found at Ser-497. Residue Thr-510 is modified to Phosphothreonine. Ser-521 is modified (phosphoserine; by autocatalysis). At Thr-531 the chain carries Phosphothreonine; by autocatalysis. Residues 594 to 643 enclose the KA1 domain; the sequence is SDFGKVTMQFELEVCQLQRPDVVGIRRQRLKGDAWVYKRLVEDILSGCKM.

The protein belongs to the protein kinase superfamily. CAMK Ser/Thr protein kinase family. SNF1 subfamily. Monomer. Interacts with ZNF622 and PPP1R8. Autophosphorylated: autophosphorylation of the T-loop at Thr-167 and Ser-171 is required for activation. In terms of tissue distribution, expressed in testis, ovary, thymus, spleen and T-cell. Expressed by neural progenitors: highly enriched in cultures containing multipotent progenitors.

Its subcellular location is the cell membrane. It carries out the reaction L-tyrosyl-[protein] + ATP = O-phospho-L-tyrosyl-[protein] + ADP + H(+). It catalyses the reaction L-seryl-[protein] + ATP = O-phospho-L-seryl-[protein] + ADP + H(+). The catalysed reaction is L-threonyl-[protein] + ATP = O-phospho-L-threonyl-[protein] + ADP + H(+). With respect to regulation, activated by autophosphorylation of the T-loop at Thr-167 and Ser-171: in contrast to other members of the SNF1 subfamily, phosphorylation at Thr-167 is not mediated by STK11/LKB1 but via autophosphorylation instead. Inhibited by calcium-binding. Kinase activity is also regulated by reducing agents: dithiothreitol (DTT) or reduced glutathione are required for kinase activity in vitro; such dependence is however not due to the presence of disulfide bonds. Functionally, serine/threonine-protein kinase involved in various processes such as cell cycle regulation, self-renewal of stem cells, apoptosis and splicing regulation. Has a broad substrate specificity; phosphorylates BCL2L14, CDC25B, MAP3K5/ASK1 and ZNF622. Acts as an activator of apoptosis by phosphorylating and activating MAP3K5/ASK1. Acts as a regulator of cell cycle, notably by mediating phosphorylation of CDC25B, promoting localization of CDC25B to the centrosome and the spindle poles during mitosis. Plays a key role in cell proliferation. Required for proliferation of embryonic and postnatal multipotent neural progenitors. Phosphorylates and inhibits BCL2L14. Also involved in the inhibition of spliceosome assembly during mitosis by phosphorylating ZNF622, thereby contributing to its redirection to the nucleus. May also play a role in primitive hematopoiesis. This is Maternal embryonic leucine zipper kinase (Melk) from Mus musculus (Mouse).